Reading from the N-terminus, the 454-residue chain is Tegument protein VP16 homolog (454 aa).

The protein belongs to the herpesviridae tegument protein VP16 protein family. As to quaternary structure, associates with the VP16-induced complex; binding to host HCFC1 activates VP16 for association with the octamer motif-binding host protein POU2F1, to form a multiprotein-DNA complex responsible for activating transcription of the viral immediate early genes.

The protein resides in the virion tegument. Its subcellular location is the host nucleus. Transcriptional activator of immediate-early (IE) gene products (alpha genes). Acts as a key activator of lytic infection by initiating the lytic program through the assembly of the transcriptional regulatory VP16-induced complex composed of VP16 and two cellular factors, HCFC1 and POU2F1. VP16-induced complex represents a regulatory switch: when it is on, it promotes IE-gene expression and thus lytic infection, and when it is off, it limits IE-gene transcription favoring latent infection. In terms of biological role, may play a role in the aggregation of tegument proteins around nucleocapsids during virus morphogenesis. The protein is Tegument protein VP16 homolog (12) of Equine herpesvirus 4 (strain 1942) (EHV-4).